We begin with the raw amino-acid sequence, 500 residues long: Squalene epoxidase ERG1 (500 aa).

The helical transmembrane segment at 20-40 (EADVVVVGAGVFGCTMAFALA) threads the bilayer. FAD-binding positions include 30–31 (VF), 50–51 (ER), Arg-58, Arg-145, Asp-332, and Met-345. The next 2 helical transmembrane spans lie at 450–470 (AFLA…LGIF) and 474–494 (LAII…IPIM).

Belongs to the squalene monooxygenase family. The cofactor is FAD.

It is found in the microsome membrane. It localises to the endoplasmic reticulum membrane. Its subcellular location is the lipid droplet. It carries out the reaction squalene + reduced [NADPH--hemoprotein reductase] + O2 = (S)-2,3-epoxysqualene + oxidized [NADPH--hemoprotein reductase] + H2O + H(+). Its pathway is terpene metabolism; lanosterol biosynthesis; lanosterol from farnesyl diphosphate: step 2/3. It functions in the pathway steroid metabolism; ergosterol biosynthesis. Functionally, squalene epoxidase; part of the third module of ergosterol biosynthesis pathway that includes the late steps of the pathway. ERG1 catalyzes the epoxidation of squalene into 2,3-epoxysqualene. The third module or late pathway involves the ergosterol synthesis itself through consecutive reactions that mainly occur in the endoplasmic reticulum (ER) membrane. Firstly, the squalene synthase ERG9 catalyzes the condensation of 2 farnesyl pyrophosphate moieties to form squalene, which is the precursor of all steroids. Squalene synthase is crucial for balancing the incorporation of farnesyl diphosphate (FPP) into sterol and nonsterol isoprene synthesis. Secondly, squalene is converted into lanosterol by the consecutive action of the squalene epoxidase ERG1 and the lanosterol synthase ERG7. Then, the delta(24)-sterol C-methyltransferase ERG6 methylates lanosterol at C-24 to produce eburicol. Eburicol is the substrate of the sterol 14-alpha demethylase encoded by CYP51A, CYP51B and CYP51C, to yield 4,4,24-trimethyl ergosta-8,14,24(28)-trienol. CYP51B encodes the enzyme primarily responsible for sterol 14-alpha-demethylation, and plays an essential role in ascospore formation. CYP51A encodes an additional sterol 14-alpha-demethylase, induced on ergosterol depletion and responsible for the intrinsic variation in azole sensitivity. The third CYP51 isoform, CYP51C, does not encode a sterol 14-alpha-demethylase, but is required for full virulence on host wheat ears. The C-14 reductase ERG24 then reduces the C14=C15 double bond which leads to 4,4-dimethylfecosterol. A sequence of further demethylations at C-4, involving the C-4 demethylation complex containing the C-4 methylsterol oxidases ERG25, the sterol-4-alpha-carboxylate 3-dehydrogenase ERG26 and the 3-keto-steroid reductase ERG27, leads to the production of fecosterol via 4-methylfecosterol. ERG28 has a role as a scaffold to help anchor ERG25, ERG26 and ERG27 to the endoplasmic reticulum. The C-8 sterol isomerase ERG2 then catalyzes the reaction which results in unsaturation at C-7 in the B ring of sterols and thus converts fecosterol to episterol. The sterol-C5-desaturases ERG3A and ERG3BB then catalyze the introduction of a C-5 double bond in the B ring to produce 5-dehydroepisterol. The C-22 sterol desaturases ERG5A and ERG5B further convert 5-dehydroepisterol into ergosta-5,7,22,24(28)-tetraen-3beta-ol by forming the C-22(23) double bond in the sterol side chain. Finally, ergosta-5,7,22,24(28)-tetraen-3beta-ol is substrate of the C-24(28) sterol reductase ERG4 to produce ergosterol. This chain is Squalene epoxidase ERG1, found in Gibberella zeae (strain ATCC MYA-4620 / CBS 123657 / FGSC 9075 / NRRL 31084 / PH-1) (Wheat head blight fungus).